Reading from the N-terminus, the 244-residue chain is Small ribosomal subunit protein uS2 (244 aa).

It belongs to the universal ribosomal protein uS2 family.

The polypeptide is Small ribosomal subunit protein uS2 (Desulforudis audaxviator (strain MP104C)).